The sequence spans 502 residues: L-ornithine N(5)-monooxygenase (502 aa).

The span at 1–10 (MEPVERKLEI) shows a compositional bias: basic and acidic residues. The segment at 1 to 34 (MEPVERKLEIGSRSYSKMPLTQQRSSGEPPRLKA) is disordered. The span at 13-26 (RSYSKMPLTQQRSS) shows a compositional bias: polar residues. FAD is bound by residues 83-91 (ERQKQFAWH) and Q102. Residue K107 coordinates substrate. V168 lines the FAD pocket. Residues 254 to 257 (SGQS) and R279 contribute to the NADP(+) site. Residues 293–296 (NEVF) and N323 each bind substrate. Residue 323–325 (NYS) participates in NADP(+) binding. 466 to 468 (SLL) provides a ligand contact to FAD. S469 is a binding site for substrate.

This sequence belongs to the lysine N(6)-hydroxylase/L-ornithine N(5)-oxygenase family. Homotetramer. FAD is required as a cofactor.

It carries out the reaction L-ornithine + NADPH + O2 = N(5)-hydroxy-L-ornithine + NADP(+) + H2O. It catalyses the reaction L-ornithine + NADH + O2 = N(5)-hydroxy-L-ornithine + NAD(+) + H2O. Its pathway is siderophore biosynthesis. Catalyzes the conversion of L-ornithine to N(5)-hydroxyornithine, the first step in the biosynthesis of all hydroxamate-containing siderophores, such as deferriferrichrysin. The sequence is that of L-ornithine N(5)-monooxygenase from Aspergillus oryzae (strain ATCC 42149 / RIB 40) (Yellow koji mold).